The sequence spans 428 residues: Gamma-glutamyl phosphate reductase (428 aa).

It belongs to the gamma-glutamyl phosphate reductase family.

The protein resides in the cytoplasm. The catalysed reaction is L-glutamate 5-semialdehyde + phosphate + NADP(+) = L-glutamyl 5-phosphate + NADPH + H(+). The protein operates within amino-acid biosynthesis; L-proline biosynthesis; L-glutamate 5-semialdehyde from L-glutamate: step 2/2. In terms of biological role, catalyzes the NADPH-dependent reduction of L-glutamate 5-phosphate into L-glutamate 5-semialdehyde and phosphate. The product spontaneously undergoes cyclization to form 1-pyrroline-5-carboxylate. The protein is Gamma-glutamyl phosphate reductase of Mesorhizobium japonicum (strain LMG 29417 / CECT 9101 / MAFF 303099) (Mesorhizobium loti (strain MAFF 303099)).